Consider the following 806-residue polypeptide: Leucine--tRNA ligase (806 aa).

Positions 40-51 (PYPSGAGLHVGH) match the 'HIGH' region motif. The 'KMSKS' region motif lies at 576–580 (KMSKS). Lys579 is a binding site for ATP.

It belongs to the class-I aminoacyl-tRNA synthetase family.

Its subcellular location is the cytoplasm. The enzyme catalyses tRNA(Leu) + L-leucine + ATP = L-leucyl-tRNA(Leu) + AMP + diphosphate. The polypeptide is Leucine--tRNA ligase (Halalkalibacterium halodurans (strain ATCC BAA-125 / DSM 18197 / FERM 7344 / JCM 9153 / C-125) (Bacillus halodurans)).